The following is a 141-amino-acid chain: MLMPKRVKYRKQQRGKMRGKAKGGTLVHFGDWGLKALEPHWITAQQIEACRIAIMRTLKRNGKVWIRVFPDKPITSKGIGVRMGKGKGDVEGWVAVVKPGKILFEIGGINDELAKEALAYAATKLPIKTKIVPRYEIGGEL.

It belongs to the universal ribosomal protein uL16 family. As to quaternary structure, part of the 50S ribosomal subunit.

Functionally, binds 23S rRNA and is also seen to make contacts with the A and possibly P site tRNAs. The protein is Large ribosomal subunit protein uL16 of Kosmotoga olearia (strain ATCC BAA-1733 / DSM 21960 / TBF 19.5.1).